A 117-amino-acid polypeptide reads, in one-letter code: Large ribosomal subunit protein uL22 (117 aa).

The protein belongs to the universal ribosomal protein uL22 family. In terms of assembly, part of the 50S ribosomal subunit.

Its function is as follows. This protein binds specifically to 23S rRNA; its binding is stimulated by other ribosomal proteins, e.g. L4, L17, and L20. It is important during the early stages of 50S assembly. It makes multiple contacts with different domains of the 23S rRNA in the assembled 50S subunit and ribosome. In terms of biological role, the globular domain of the protein is located near the polypeptide exit tunnel on the outside of the subunit, while an extended beta-hairpin is found that lines the wall of the exit tunnel in the center of the 70S ribosome. The polypeptide is Large ribosomal subunit protein uL22 (Leptospira biflexa serovar Patoc (strain Patoc 1 / ATCC 23582 / Paris)).